A 503-amino-acid polypeptide reads, in one-letter code: Probable cytosol aminopeptidase (503 aa).

Mn(2+) is bound by residues Lys270 and Asp275. Lys282 is a catalytic residue. Residues Asp293, Asp352, and Glu354 each contribute to the Mn(2+) site. Arg356 is an active-site residue.

This sequence belongs to the peptidase M17 family. The cofactor is Mn(2+).

It localises to the cytoplasm. It catalyses the reaction Release of an N-terminal amino acid, Xaa-|-Yaa-, in which Xaa is preferably Leu, but may be other amino acids including Pro although not Arg or Lys, and Yaa may be Pro. Amino acid amides and methyl esters are also readily hydrolyzed, but rates on arylamides are exceedingly low.. The enzyme catalyses Release of an N-terminal amino acid, preferentially leucine, but not glutamic or aspartic acids.. Its function is as follows. Presumably involved in the processing and regular turnover of intracellular proteins. Catalyzes the removal of unsubstituted N-terminal amino acids from various peptides. In Salmonella typhi, this protein is Probable cytosol aminopeptidase.